The primary structure comprises 251 residues: Triosephosphate isomerase (251 aa).

9 to 11 serves as a coordination point for substrate; sequence NWK. The active-site Electrophile is His-95. Glu-167 serves as the catalytic Proton acceptor. Residues Gly-173, Ser-213, and 234-235 each bind substrate; that span reads GG.

It belongs to the triosephosphate isomerase family. In terms of assembly, homodimer.

Its subcellular location is the cytoplasm. It carries out the reaction D-glyceraldehyde 3-phosphate = dihydroxyacetone phosphate. The protein operates within carbohydrate biosynthesis; gluconeogenesis. Its pathway is carbohydrate degradation; glycolysis; D-glyceraldehyde 3-phosphate from glycerone phosphate: step 1/1. In terms of biological role, involved in the gluconeogenesis. Catalyzes stereospecifically the conversion of dihydroxyacetone phosphate (DHAP) to D-glyceraldehyde-3-phosphate (G3P). The protein is Triosephosphate isomerase of Pediococcus pentosaceus (strain ATCC 25745 / CCUG 21536 / LMG 10740 / 183-1w).